A 324-amino-acid chain; its full sequence is MLTSEAVVAASARLGPTSGPKQEEVCQPSGAVHESIIRAPLDYLLMLPGKNVRGKMITAFNEWLQLPAEKLEVIKRIVELLHTASLLLDDIQDSSKLRRGLPVAHSIFGISQTINSANYAYFLAQQELPKLGDRRAFEIFTEELLNLHRGQGMDLYWRDSLICPTEEEYLAMVSNKTGGLFRLAIKLMQMASETDKDYVPLVNLLGNIFQVRDDYLNLQSDAYSKNKGFGEDLTEGKFSFPIIHSIRANPANIQLSSILKQRTDDNDVKEFAIRYIESTGSFEYCRQRLAELAAEARELAKDMEGTATHAQGIERILGMLGIME.

Positions 50, 53, and 82 each coordinate isopentenyl diphosphate. The Mg(2+) site is built by D89 and D93. R98 is a binding site for dimethylallyl diphosphate. Position 99 (R99) interacts with isopentenyl diphosphate. Dimethylallyl diphosphate-binding residues include K176, T177, and Q210. Mg(2+) is bound at residue D213. 3 residues coordinate dimethylallyl diphosphate: N217, K227, and K237.

This sequence belongs to the FPP/GGPP synthase family. Mg(2+) serves as cofactor.

It catalyses the reaction isopentenyl diphosphate + dimethylallyl diphosphate = (2E)-geranyl diphosphate + diphosphate. The enzyme catalyses isopentenyl diphosphate + (2E)-geranyl diphosphate = (2E,6E)-farnesyl diphosphate + diphosphate. The catalysed reaction is isopentenyl diphosphate + (2E,6E)-farnesyl diphosphate = (2E,6E,10E)-geranylgeranyl diphosphate + diphosphate. The protein operates within secondary metabolite biosynthesis; terpenoid biosynthesis. Geranylgeranyl pyrophosphate synthase; part of the gene cluster that mediates the biosynthesis of diterpenoid pyrones. The first step of the pathway is the synthesis of the alpha-pyrone moiety by the polyketide synthase dpmpA via condensation of one acetyl-CoA starter unit with 3 malonyl-CoA units and 2 methylations. The alpha-pyrone is then combined with geranylgeranyl pyrophosphate (GGPP) formed by the GGPP synthase dpmpD through the action of the prenyltransferase dpmpC to yield a linear alpha-pyrone diterpenoid. Subsequent steps in the diterpenoid pyrone biosynthetic pathway involve the decalin core formation, which is initiated by the epoxidation of the C10-C11 olefin by the FAD-dependent oxidoreductase dpmpE, and is followed by a cyclization cascade catalyzed by the terpene cyclase dpmpB. The short chain dehydrogenase/reductase dpmpG then oxidizes the 8S hydroxy group to a ketone and the short chain dehydrogenase/reductase dpmpH reduces the ketone to the 8R hydroxy group to yield higginsianin B. Higginsianin B is further methylated by the methyltransferase dpmpI to produce the intermediate named FDDP B. The cytochrome P450 monooxygenase dpmpJ then oxidizes the C-26 methyl to primary alcohol, producing the final diterpenoid pyrone with a C-26 primary alcohol on the gamma-pyrone moiety named FDDP C. This Macrophomina phaseolina (strain MS6) (Charcoal rot fungus) protein is Geranylgeranyl pyrophosphate synthase dpmpD.